Here is a 274-residue protein sequence, read N- to C-terminus: Outer surface protein A (274 aa).

The first 16 residues, 1–16 (MKKYLLGIGLILALIA), serve as a signal peptide directing secretion. Cys17 carries the N-palmitoyl cysteine lipid modification. Residue Cys17 is the site of S-diacylglycerol cysteine attachment.

It belongs to the OspA lipoprotein family.

The protein resides in the cell outer membrane. It localises to the cell surface. The sequence is that of Outer surface protein A from Borreliella burgdorferi (Lyme disease spirochete).